The chain runs to 616 residues: Probable Xaa-Pro aminopeptidase P (616 aa).

The Mn(2+) site is built by aspartate 413, aspartate 424, glutamate 522, and glutamate 536.

Belongs to the peptidase M24B family. Requires Mn(2+) as cofactor.

It carries out the reaction Release of any N-terminal amino acid, including proline, that is linked to proline, even from a dipeptide or tripeptide.. Its function is as follows. Catalyzes the removal of a penultimate prolyl residue from the N-termini of peptides. The sequence is that of Probable Xaa-Pro aminopeptidase P (AMPP) from Paracoccidioides brasiliensis (strain Pb03).